The chain runs to 160 residues: MMERFEKIEMKIPAKAEYVAIIRLTMAGVANRMGFAYDDIEDMKIAISEACTNIVQHAYKEDVGEITIVFGLYEDRLEIMVADNGVSFDFNNLKRKVGPYDINKPVEHLPENGLGLYLINTLMDDIQIMHDEGMTVLMTKYIQREQVENDGNPISTYNSY.

It belongs to the anti-sigma-factor family.

It catalyses the reaction L-seryl-[protein] + ATP = O-phospho-L-seryl-[protein] + ADP + H(+). The catalysed reaction is L-threonyl-[protein] + ATP = O-phospho-L-threonyl-[protein] + ADP + H(+). Negative regulator of sigma-B activity. Phosphorylates and inactivates its specific antagonist protein, RsbV. Upon phosphorylation of RsbV, RsbW is released and binds to sigma-B, thereby blocking its ability to form an RNA polymerase holoenzyme (E-sigma-B). This is Serine-protein kinase RsbW from Bacillus cereus (strain ATCC 10987 / NRS 248).